Here is a 191-residue protein sequence, read N- to C-terminus: Adenylate kinase (191 aa).

9–17 (GVPGVGATT) contributes to the ATP binding site.

Belongs to the archaeal adenylate kinase family.

The protein localises to the cytoplasm. The catalysed reaction is AMP + ATP = 2 ADP. In Methanopyrus kandleri (strain AV19 / DSM 6324 / JCM 9639 / NBRC 100938), this protein is Adenylate kinase.